The sequence spans 318 residues: NADH-ubiquinone oxidoreductase chain 1 (318 aa).

8 consecutive transmembrane segments (helical) span residues 3-23 (FMNLLTTIIPILLAVAFLTLL), 69-89 (VLFIIAPTLALTLALMMWIPL), 102-122 (ILFMLALSSLAVYGIMWSGWA), 146-166 (LAIIILSILLMNGSFALSTLI), 171-191 (HIWLILPSWPLAMMWFISTLA), 222-242 (LFFLAEYANIIMMNALTIILF), 253-273 (ELYTTNFMIKALVLTTLFLWV), and 294-314 (LPLTLVMCMWHVTLPIILAGI).

This sequence belongs to the complex I subunit 1 family. As to quaternary structure, core subunit of respiratory chain NADH dehydrogenase (Complex I) which is composed of 45 different subunits.

The protein resides in the mitochondrion inner membrane. It carries out the reaction a ubiquinone + NADH + 5 H(+)(in) = a ubiquinol + NAD(+) + 4 H(+)(out). In terms of biological role, core subunit of the mitochondrial membrane respiratory chain NADH dehydrogenase (Complex I) which catalyzes electron transfer from NADH through the respiratory chain, using ubiquinone as an electron acceptor. Essential for the catalytic activity and assembly of complex I. This is NADH-ubiquinone oxidoreductase chain 1 (MT-ND1) from Cnephaeus nilssonii (Northern bat).